Here is a 191-residue protein sequence, read N- to C-terminus: Large ribosomal subunit protein bL9 (191 aa).

The tract at residues 149-191 is disordered; it reads EEAERQSKGESLTSADAIYGVDEDALRPEDFFDPEADGNEDDE. Residues 179–191 show a composition bias toward acidic residues; it reads FFDPEADGNEDDE.

The protein belongs to the bacterial ribosomal protein bL9 family.

Functionally, binds to the 23S rRNA. The protein is Large ribosomal subunit protein bL9 (rplI) of Agrobacterium fabrum (strain C58 / ATCC 33970) (Agrobacterium tumefaciens (strain C58)).